Consider the following 452-residue polypeptide: UDP-N-acetylmuramoyl-tripeptide--D-alanyl-D-alanine ligase (452 aa).

Residue 107 to 113 (GSSGKTS) participates in ATP binding.

This sequence belongs to the MurCDEF family. MurF subfamily. Monomer.

The protein localises to the cytoplasm. The catalysed reaction is D-alanyl-D-alanine + UDP-N-acetyl-alpha-D-muramoyl-L-alanyl-gamma-D-glutamyl-meso-2,6-diaminopimelate + ATP = UDP-N-acetyl-alpha-D-muramoyl-L-alanyl-gamma-D-glutamyl-meso-2,6-diaminopimeloyl-D-alanyl-D-alanine + ADP + phosphate + H(+). It participates in cell wall biogenesis; peptidoglycan biosynthesis. In terms of biological role, involved in cell wall formation. Catalyzes the final step in the synthesis of UDP-N-acetylmuramoyl-pentapeptide, the precursor of murein. This Escherichia coli (strain K12) protein is UDP-N-acetylmuramoyl-tripeptide--D-alanyl-D-alanine ligase.